A 316-amino-acid polypeptide reads, in one-letter code: MSLDVVVVMDPIASIKIAKDTTFAMLLEAQRRGHRLHYVRPGGLSLREGRAVAQVAPLSVREDKTSWFTLGEFAELAFGPGQVVLMRKDPPVDAEFVYDTQVLSVAQRAGAQIVNDPQGLRDYNEKLAALLFPQCCPPTLVSRDAAALKAFVLEHGQAVLKPLDGMGGRSIFRSGSGDPNLNVILETLTDGNRKLTLAQRFIPDITAGDKRILLVDGLPVDYCLARIPQGDEFRGNLAAGGRGEGRPLSERDRWIAAQVGPEMRRRGMRFVGLDVIGDYLTEVNVTSPTCVRELDAQFGLNIAGLLFDAIEAGAAQ.

Positions 124–311 (NEKLAALLFP…IAGLLFDAIE (188 aa)) constitute an ATP-grasp domain. Residue 151–208 (FVLEHGQAVLKPLDGMGGRSIFRSGSGDPNLNVILETLTDGNRKLTLAQRFIPDITAG) coordinates ATP. Mg(2+) is bound by residues E282 and N284.

Belongs to the prokaryotic GSH synthase family. The cofactor is Mg(2+). Mn(2+) is required as a cofactor.

It catalyses the reaction gamma-L-glutamyl-L-cysteine + glycine + ATP = glutathione + ADP + phosphate + H(+). Its pathway is sulfur metabolism; glutathione biosynthesis; glutathione from L-cysteine and L-glutamate: step 2/2. The polypeptide is Glutathione synthetase (Xanthomonas axonopodis pv. citri (strain 306)).